The chain runs to 220 residues: Carbonic anhydrase (220 aa).

Zn(2+) contacts are provided by cysteine 39, aspartate 41, histidine 98, and cysteine 101.

It belongs to the beta-class carbonic anhydrase family. Zn(2+) serves as cofactor.

It carries out the reaction hydrogencarbonate + H(+) = CO2 + H2O. The polypeptide is Carbonic anhydrase (cynT) (Pseudomonas aeruginosa (strain ATCC 15692 / DSM 22644 / CIP 104116 / JCM 14847 / LMG 12228 / 1C / PRS 101 / PAO1)).